The chain runs to 1249 residues: Calmodulin-regulated spectrin-associated protein 3 (1249 aa).

Disordered stretches follow at residues 183–205, 328–385, 430–457, 473–609, 632–696, 714–1029, and 1061–1111; these read KTEQ…APAQ, PDGH…SMSH, VSSD…GDLP, LLPD…RLEE, LGKS…HEGL, QRDM…SALA, and NNLG…TGPR. A Phosphothreonine modification is found at Thr-184. Low complexity predominate over residues 189-205; sequence AQRASPAAPADGAAPAQ. The residue at position 193 (Ser-193) is a Phosphoserine. The 110-residue stretch at 203-312 folds into the Calponin-homology (CH) domain; it reads PAQPSIRYRK…LVVMLAELFM (110 aa). A phosphoserine mark is found at Ser-334, Ser-341, Ser-347, Ser-351, Ser-368, Ser-373, and Ser-382. A compositionally biased stretch (low complexity) spans 341 to 352; it reads SPPQNNSGSSSP. Residues 364 to 383 are compositionally biased toward polar residues; it reads GGPQSPLRGSTGSLKSSPSM. The span at 437–454 shows a compositional bias: pro residues; it reads PPRPAPARTPTQPPPEPG. Phosphoserine is present on residues Ser-547, Ser-554, and Ser-560. Basic and acidic residues predominate over residues 568 to 579; the sequence is AERKKQLVKAEA. Residues 594-604 show a composition bias toward low complexity; it reads EALSSEMSELS. The stretch at 594–628 forms a coiled coil; sequence EALSSEMSELSARLEEKRRAIEAQKRRIEAIFAKH. A compositionally biased stretch (acidic residues) spans 647–657; sequence GEAEAEAEEAD. Position 685 is a phosphoserine (Ser-685). A coiled-coil region spans residues 696 to 729; that stretch reads LGEYNRAVSKLSAALSSLQRDMQRLTDQQQRLLA. The span at 731-741 shows a compositional bias: pro residues; that stretch reads PEAPGSAPPPA. Over residues 754 to 779 the composition is skewed to low complexity; sequence AASPSPARRVPATRRSPGPGPSQSPR. The residue at position 769 (Ser-769) is a Phosphoserine. Thr-799 carries the post-translational modification Phosphothreonine. Ser-814 carries the phosphoserine modification. Positions 814–825 are enriched in polar residues; it reads SPSQVPVQTRSS. Positions 889–940 are enriched in basic and acidic residues; that stretch reads YKDEDKPEDEMAQKRASLLERQQRRAEEARRRKQWQEVEKEQRREEAARLAQ. Residues 896–935 are a coiled coil; the sequence is EDEMAQKRASLLERQQRRAEEARRRKQWQEVEKEQRREEA. Residues 950 to 964 are compositionally biased toward low complexity; sequence VSAVPMATPAPAARA. The segment covering 970-998 has biased composition (basic and acidic residues); that stretch reads VGPRKGDFTRQEYERRAQLKLMDDLDKVL. Residue Ser-1074 is modified to Phosphoserine. A CKK domain is found at 1109 to 1243; that stretch reads GPRLYKEPSA…QGKKPTTPKK (135 aa).

It belongs to the CAMSAP1 family. Interacts with PLEKHA7. Interacts with CAMSAP2. Interacts with KATNA1 and KATNB1; leading to regulate the length of CAMSAP3-decorated microtubule stretches. Interacts with AKAP9; regulating Golgi assembly in epithelial cells. Interacts with MACF1. Interacts with AKNA.

The protein localises to the cytoplasm. It localises to the cytoskeleton. It is found in the cell junction. The protein resides in the adherens junction. Its subcellular location is the cilium axoneme. The protein localises to the cilium basal body. Key microtubule-organizing protein that specifically binds the minus-end of non-centrosomal microtubules and regulates their dynamics and organization. Specifically recognizes growing microtubule minus-ends and autonomously decorates and stabilizes microtubule lattice formed by microtubule minus-end polymerization. Acts on free microtubule minus-ends that are not capped by microtubule-nucleating proteins or other factors and protects microtubule minus-ends from depolymerization. In addition, it also reduces the velocity of microtubule polymerization. Required for the biogenesis and the maintenance of zonula adherens by anchoring the minus-end of microtubules to zonula adherens and by recruiting the kinesin KIFC3 to those junctional sites. Required for orienting the apical-to-basal polarity of microtubules in epithelial cells: acts by tethering non-centrosomal microtubules to the apical cortex, leading to their longitudinal orientation. Plays a key role in early embryos, which lack centrosomes: accumulates at the microtubule bridges that connect pairs of cells and enables the formation of a non-centrosomal microtubule-organizing center that directs intracellular transport in the early embryo. Couples non-centrosomal microtubules with actin: interaction with MACF1 at the minus ends of non-centrosomal microtubules, tethers the microtubules to actin filaments, regulating focal adhesion size and cell migration. Plays a key role in the generation of non-centrosomal microtubules by accumulating in the pericentrosomal region and cooperating with KATNA1 to release non-centrosomal microtubules from the centrosome. Through the microtubule cytoskeleton, also regulates the organization of cellular organelles including the Golgi and the early endosomes. Through interaction with AKAP9, involved in translocation of Golgi vesicles in epithelial cells, where microtubules are mainly non-centrosomal. Plays an important role in motile cilia function by facilitatating proper orientation of basal bodies and formation of central microtubule pairs in motile cilia. This chain is Calmodulin-regulated spectrin-associated protein 3, found in Homo sapiens (Human).